We begin with the raw amino-acid sequence, 267 residues long: Probable E3 ubiquitin-protein ligase dma1 (267 aa).

An FHA domain is found at 60–116 (IYIGRYTERYNGGDVSAIVFRSKVVSRRHAQIFYENNTWYIQDMGSSSGTFLNHVRL). An RING-type zinc finger spans residues 192-236 (CCICLMPVLPCQALFVAPCSHSYHYKCIRPTLNESHPYFSCFICR).

This sequence belongs to the DMA1 family. Interacts with sid4.

It is found in the cytoplasm. The protein resides in the cytoskeleton. The protein localises to the microtubule organizing center. It localises to the spindle pole body. The enzyme catalyses S-ubiquitinyl-[E2 ubiquitin-conjugating enzyme]-L-cysteine + [acceptor protein]-L-lysine = [E2 ubiquitin-conjugating enzyme]-L-cysteine + N(6)-ubiquitinyl-[acceptor protein]-L-lysine.. In terms of biological role, probable E3 ubiquitin-protein ligase which is a component of the spindle assembly checkpoint, required to prevent septum formation and premature exit from mitosis if spindle function is compromised. Inhibits the septation initiation netwok (SIN) during spindle checkpoint activation. The effect appears to be mediated through preventing the SIN activator, plo1 kinase, from localizing to the SPB. This is Probable E3 ubiquitin-protein ligase dma1 (dma1) from Schizosaccharomyces pombe (strain 972 / ATCC 24843) (Fission yeast).